The primary structure comprises 1454 residues: Probable cleavage and polyadenylation specificity factor subunit 1 (1454 aa).

Positions 736–765 (KQSNTRKRKRLGHDAIQSSRGGEQSDAIDP) are disordered.

This sequence belongs to the CPSF1 family. In terms of assembly, CPSF is a heterotetramer composed of four distinct subunits 160 (cpsf-1), 100 (cpsf-2), 70 (cpsf-3), and 30 kDa (cpsf-4).

The protein resides in the nucleus. Functionally, CPSF plays a key role in pre-mRNA 3'-end formation, recognizing the AAUAAA signal sequence and interacting with poly(A)polymerase and other factors to bring about cleavage and poly(A) addition. This subunit is involved in the RNA recognition step of the polyadenylation reaction. This is Probable cleavage and polyadenylation specificity factor subunit 1 (cpsf-1) from Caenorhabditis elegans.